We begin with the raw amino-acid sequence, 247 residues long: ATP synthase subunit a, chloroplastic (247 aa).

5 helical membrane passes run 38–58 (QVLI…TIAV), 95–115 (VPFI…GALL), 134–154 (INTT…AGLT), 199–219 (LVVV…VMLL), and 220–240 (GLFT…AYIG).

The protein belongs to the ATPase A chain family. As to quaternary structure, F-type ATPases have 2 components, CF(1) - the catalytic core - and CF(0) - the membrane proton channel. CF(1) has five subunits: alpha(3), beta(3), gamma(1), delta(1), epsilon(1). CF(0) has four main subunits: a, b, b' and c.

It is found in the plastid. The protein resides in the chloroplast thylakoid membrane. Its function is as follows. Key component of the proton channel; it plays a direct role in the translocation of protons across the membrane. The sequence is that of ATP synthase subunit a, chloroplastic from Solanum lycopersicum (Tomato).